Consider the following 343-residue polypeptide: MIEVGIVGGSGYGAIELIRLLIQHPNVNIKYIFSHSKQDQPIKETFPHLEQLTYHYETLNSEGIECDVIFFATPSNVSKHIVPQLLSKRIKIIDLSGDFRLTNRATYETYYGETAASQEYLNEANYSIAEWSNVNAQTTQLIANPGCFPTATLLALHPLIDKDIVKQDNIIIDAKTGVSGAGRSLAQHVHFAEMNENLSAYAIGKHKHKPEIEQYLSLLAQQEVKVTFTPHLVPMTRGILSTIYIKLNHAFTNEDLHNLFKDYYEDKPFVRIRSLGQFPKTKEVYGSNYCDIGIYVDEENQTAILVSVIDNLVKGASGQAIQNLNLMYGWKENTGLLQSPVYP.

The active site involves Cys147.

The protein belongs to the NAGSA dehydrogenase family. Type 1 subfamily.

It is found in the cytoplasm. The enzyme catalyses N-acetyl-L-glutamate 5-semialdehyde + phosphate + NADP(+) = N-acetyl-L-glutamyl 5-phosphate + NADPH + H(+). It participates in amino-acid biosynthesis; L-arginine biosynthesis; N(2)-acetyl-L-ornithine from L-glutamate: step 3/4. Functionally, catalyzes the NADPH-dependent reduction of N-acetyl-5-glutamyl phosphate to yield N-acetyl-L-glutamate 5-semialdehyde. This is N-acetyl-gamma-glutamyl-phosphate reductase from Staphylococcus saprophyticus subsp. saprophyticus (strain ATCC 15305 / DSM 20229 / NCIMB 8711 / NCTC 7292 / S-41).